The following is a 395-amino-acid chain: Protein BTN1 (395 aa).

The signal sequence occupies residues 1-31 (MQLEPAHLVYAAFWTFGLVNNVLYVVILTAA). 10 helical membrane-spanning segments follow: residues 43-63 (VVLLADVLPSFLIKLAAPFFI), 74-94 (LLVGLSTVGMMSVSLASPLFL), 96-116 (LVGVVLASFSSGLGEVTFLQL), 134-154 (GAGLVGSGLFMLLTTVLGVSV), 158-178 (LLVFAFFPLAFLGVYFYLLPP), 222-242 (PLVMPYMLPLFLVYFSEYTIN), 261-278 (FRDVYVTYGTLYQLGVFI), 291-311 (IMIPSVLQFANLVFCIAQSMS), 313-333 (ILPNVWLVFILIFYEGLLGGA), and 355-375 (LGSVGMSDSAGIVLAGLVSLW).

This sequence belongs to the battenin family.

Its subcellular location is the vacuole membrane. In terms of biological role, involved in vacuolar transport and vacuole pH homeostasis. Also required for cytokinesis. This chain is Protein BTN1 (BTN1), found in Yarrowia lipolytica (strain CLIB 122 / E 150) (Yeast).